The following is a 300-amino-acid chain: ADP-polyphosphate phosphotransferase 1 (300 aa).

The protein belongs to the polyphosphate kinase 2 (PPK2) family. Class I subfamily. Homotetramer. Requires Mg(2+) as cofactor.

The catalysed reaction is [phosphate](n) + ATP = [phosphate](n+1) + ADP. It carries out the reaction [phosphate](n) + GTP = [phosphate](n+1) + GDP. In terms of biological role, uses inorganic polyphosphate (polyP) as a donor to convert ADP to ATP. Can also convert GDP to GTP, with lower efficiency. Cannot dephosphorylate ATP in the presence of polyP. In Rhizobium meliloti (strain 1021) (Ensifer meliloti), this protein is ADP-polyphosphate phosphotransferase 1.